The sequence spans 46 residues: uncharacterized protein (46 aa).

This is an uncharacterized protein from Shigella flexneri.